The primary structure comprises 142 residues: Putative arsenate reductase (142 aa).

Belongs to the low molecular weight phosphotyrosine protein phosphatase family.

Its function is as follows. Reduces arsenate [As(V)] to arsenite [As(III)]. In Halobacterium salinarum (strain ATCC 700922 / JCM 11081 / NRC-1) (Halobacterium halobium), this protein is Putative arsenate reductase (arsC).